Reading from the N-terminus, the 40-residue chain is U2-ctenitoxin-Pr1a (40 aa).

Intrachain disulfides connect Cys-2–Cys-17, Cys-9–Cys-22, Cys-16–Cys-32, and Cys-24–Cys-30.

As to expression, expressed by the venom gland.

It localises to the secreted. Its function is as follows. Neurotoxin. This Phoneutria reidyi (Brazilian Amazonian armed spider) protein is U2-ctenitoxin-Pr1a.